A 613-amino-acid chain; its full sequence is Putative adenosylhomocysteinase 3 (613 aa).

Low complexity-rich tracts occupy residues 1 to 14 (MSVQVVSAAAAAKV) and 35 to 44 (AAAVGAMVPP). The disordered stretch occupies residues 1–186 (MSVQVVSAAA…KQQKNSKGSS (186 aa)). Ser-2 is modified (N-acetylserine). Positions 2–111 (SVQVVSAAAA…DGGEALVSPD (110 aa)) are LISN domain, inhibits interaction with ITPR1. Residues 52–68 (APAPAPAAERPPAPGPG) show a composition bias toward pro residues. Low complexity predominate over residues 70–80 (GPTAALSPAAG). Residue Ser-109 is modified to Phosphoserine. The span at 137 to 146 (RPTKIGRRSL) shows a compositional bias: basic residues. Positions 147-166 (SRSISQSSTDSYSSAASYTD) are enriched in low complexity. A phosphoserine mark is found at Ser-151, Ser-154, Ser-157, and Ser-160. Substrate contacts are provided by Thr-238, Asp-312, and Glu-337. 338–340 (SVT) serves as a coordination point for NAD(+). Lys-367 and Asp-371 together coordinate substrate. Residues Asn-372, 403-408 (GEVGKG), Glu-424, Asn-459, 480-482 (MGH), and Asn-527 each bind NAD(+).

It belongs to the adenosylhomocysteinase family. In terms of assembly, homotetramer. Forms heteromultimers with AHCYL1 (via the C-terminal region). Interacts with ITPR1; with lower affinity than AHCYL1 and maybe via ITPR1. Interacts with SLC4A4. Interacts with ZCCHC4. NAD(+) is required as a cofactor. Phosphorylated during neuronal differentiation at the LISN domain. As to expression, highly expressed in cerebrum, cerebellum and kidney. Also expressed in thymus, spleen, testis, ovary and, at lower, levels in lung and liver (at protein level). In cerebellum, expressed in interneurons.

It localises to the cytoplasm. The protein resides in the microsome. The catalysed reaction is S-adenosyl-L-homocysteine + H2O = L-homocysteine + adenosine. Its pathway is amino-acid biosynthesis; L-homocysteine biosynthesis; L-homocysteine from S-adenosyl-L-homocysteine: step 1/1. In terms of biological role, may regulate the electrogenic sodium/bicarbonate cotransporter SLC4A4 activity and Mg(2+)-sensitivity. On the contrary of its homolog AHCYL1, does not regulate ITPR1 sensitivity to inositol 1,4,5-trisphosphate. The protein is Putative adenosylhomocysteinase 3 (Ahcyl2) of Mus musculus (Mouse).